Consider the following 612-residue polypeptide: UvrABC system protein C (612 aa).

The GIY-YIG domain maps to 11 to 90 (TASGVYLMKG…IKKYRPRYNI (80 aa)). Residues 200-235 (SEVVESLQHQMAAAAERMAFEEAARLRDQLRAIEQT) form the UVR domain.

It belongs to the UvrC family. In terms of assembly, interacts with UvrB in an incision complex.

The protein resides in the cytoplasm. Its function is as follows. The UvrABC repair system catalyzes the recognition and processing of DNA lesions. UvrC both incises the 5' and 3' sides of the lesion. The N-terminal half is responsible for the 3' incision and the C-terminal half is responsible for the 5' incision. The protein is UvrABC system protein C of Syntrophotalea carbinolica (strain DSM 2380 / NBRC 103641 / GraBd1) (Pelobacter carbinolicus).